A 370-amino-acid polypeptide reads, in one-letter code: UDP-N-acetylglucosamine--N-acetylmuramyl-(pentapeptide) pyrophosphoryl-undecaprenol N-acetylglucosamine transferase (370 aa).

UDP-N-acetyl-alpha-D-glucosamine contacts are provided by residues 10 to 12 (TGG), Asn-126, Ser-200, Ile-255, and Gln-300.

This sequence belongs to the glycosyltransferase 28 family. MurG subfamily.

Its subcellular location is the cell membrane. The catalysed reaction is Mur2Ac(oyl-L-Ala-gamma-D-Glu-L-Lys-D-Ala-D-Ala)-di-trans,octa-cis-undecaprenyl diphosphate + UDP-N-acetyl-alpha-D-glucosamine = beta-D-GlcNAc-(1-&gt;4)-Mur2Ac(oyl-L-Ala-gamma-D-Glu-L-Lys-D-Ala-D-Ala)-di-trans,octa-cis-undecaprenyl diphosphate + UDP + H(+). The protein operates within cell wall biogenesis; peptidoglycan biosynthesis. Functionally, cell wall formation. Catalyzes the transfer of a GlcNAc subunit on undecaprenyl-pyrophosphoryl-MurNAc-pentapeptide (lipid intermediate I) to form undecaprenyl-pyrophosphoryl-MurNAc-(pentapeptide)GlcNAc (lipid intermediate II). The polypeptide is UDP-N-acetylglucosamine--N-acetylmuramyl-(pentapeptide) pyrophosphoryl-undecaprenol N-acetylglucosamine transferase (Lactobacillus johnsonii (strain CNCM I-12250 / La1 / NCC 533)).